A 123-amino-acid polypeptide reads, in one-letter code: uncharacterized protein (123 aa).

Disordered stretches follow at residues 1 to 21 (MGAP…KLFK) and 82 to 123 (EKTA…EDES).

This is an uncharacterized protein from Homo sapiens (Human).